The sequence spans 351 residues: MFRLKPLISVDLNQTMSLLRRFVKEANNSRFLLQSISGRSFSTVNPNPTASPGRRTCVEFDNLIFKAGSSGDFEAVRRLLNSRVVNACFNTTATFKFLTNTDSYSSSLEDLRRILPQTDAGYTRKHSYETLIARLCKLGRIDDALVLINDMAIGEFGLSTCVFHPILNTLTKKNRIEEAWRVVELMRSHAIPVDVTSYNYFLTSHCYDGDVAEASRVLRKMEEEEEGVMSPDTRTYDALVLGACKSGRVEAAMAILRRMEEEGLSVLYATHAHVIGEMVESGYYALSVEFVMAYAGKDKRLDEENLGSLASKLIKRKRFKEAKMVLKEMSVRGLRMGDALREFHEKNVLQS.

A mitochondrion-targeting transit peptide spans 1–41; the sequence is MFRLKPLISVDLNQTMSLLRRFVKEANNSRFLLQSISGRSF. PPR repeat units follow at residues 124-158, 159-193, 194-224, and 232-266; these read RKHS…EFGL, STCV…AIPV, DVTS…MEEE, and DTRT…GLSV.

It belongs to the PPR family. P subfamily.

The protein localises to the mitochondrion. In Arabidopsis thaliana (Mouse-ear cress), this protein is Pentatricopeptide repeat-containing protein At3g56030, mitochondrial.